Consider the following 123-residue polypeptide: Large ribosomal subunit protein bL12 (123 aa).

This sequence belongs to the bacterial ribosomal protein bL12 family. Homodimer. Part of the ribosomal stalk of the 50S ribosomal subunit. Forms a multimeric L10(L12)X complex, where L10 forms an elongated spine to which 2 to 4 L12 dimers bind in a sequential fashion. Binds GTP-bound translation factors.

In terms of biological role, forms part of the ribosomal stalk which helps the ribosome interact with GTP-bound translation factors. Is thus essential for accurate translation. The protein is Large ribosomal subunit protein bL12 of Albidiferax ferrireducens (strain ATCC BAA-621 / DSM 15236 / T118) (Rhodoferax ferrireducens).